We begin with the raw amino-acid sequence, 1483 residues long: Guanylyl cyclase, membrane (1483 aa).

6 helical membrane passes run 50 to 70, 143 to 163, 168 to 188, 198 to 218, 219 to 239, and 242 to 262; these read ISII…YISP, FILR…TFTA, LWKL…LIFE, MVLL…PSML, ASGG…QIAG, and MVLL…ISRF. The tract at residues 323 to 376 is disordered; the sequence is KKDEESNLTGKKQSKVVVSPPPPPTAAAPQQQDNEISTPQNSRKIVDPQSPSSL. Positions 355-376 are enriched in polar residues; that stretch reads DNEISTPQNSRKIVDPQSPSSL. One can recognise a Guanylate cyclase 1 domain in the interval 395 to 517; it reads TVLFCEIVNF…DTINTSSRMA (123 aa). 2 disordered regions span residues 598-619 and 672-838; these read NNTI…THPN and LTSP…GDDF. Polar residues predominate over residues 610 to 619; it reads GSATGPTHPN. Low complexity-rich tracts occupy residues 672 to 684, 693 to 712, and 720 to 765; these read LTSP…PQQS, SPRL…SSST, and NNNN…NNNN. A compositionally biased stretch (polar residues) spans 772–786; it reads SPISQNTTPTGSLSL. The next 6 membrane-spanning stretches (helical) occupy residues 907-927, 982-1002, 1016-1036, 1040-1060, 1061-1081, and 1094-1114; these read ILAS…VDYF, IITG…YVVS, VVMV…SVPP, IPLD…CYNF, SGIK…FIEI, and IYLS…ITSY. In terms of domain architecture, Guanylate cyclase 2 spans 1168–1296; it reads TIFLSDIVGF…ESVQITQQME (129 aa). 3 residues coordinate Mg(2+): Asp1173, Ile1174, and Asp1217. Disordered stretches follow at residues 1348-1369 and 1393-1483; these read QPEV…SLQY and NQND…SESS. The span at 1354–1369 shows a compositional bias: polar residues; sequence RSVSVSKSNFGGSLQY. The span at 1405–1416 shows a compositional bias: low complexity; that stretch reads NENGNESSSSNI. Residues 1432–1444 show a composition bias toward acidic residues; that stretch reads NEDDESSYEDDQE. Low complexity predominate over residues 1446–1465; sequence NQYLNNSENNKNNNNNSNQI.

Belongs to the adenylyl cyclase class-4/guanylyl cyclase family. As to quaternary structure, homodimer. Mg(2+) serves as cofactor.

Its subcellular location is the membrane. The catalysed reaction is GTP = 3',5'-cyclic GMP + diphosphate. Its activity is regulated as follows. Activated by guanosine 5'-3-O-(thio)triphosphate (GTPgammaS). Inhibited by calcium. In terms of biological role, synthesizes cyclic GMP (cGMP) from GTP, after activation by heterotrimeric or monomeric G proteins. Involved in chemotaxis. The sequence is that of Guanylyl cyclase, membrane (gca) from Dictyostelium discoideum (Social amoeba).